Here is a 366-residue protein sequence, read N- to C-terminus: Leucine dehydrogenase (366 aa).

Residue K80 is part of the active site. Residue 180–186 (GVGHVAY) participates in NAD(+) binding.

Belongs to the Glu/Leu/Phe/Val dehydrogenases family. Homooctamer.

It catalyses the reaction L-leucine + NAD(+) + H2O = 4-methyl-2-oxopentanoate + NH4(+) + NADH + H(+). The protein operates within amino-acid degradation; L-leucine degradation; 4-methyl-2-oxopentanoate from L-leucine (dehydrogenase route): step 1/1. Inhibited by pyridoxal phosphate. Its function is as follows. Catalyzes the reversible deamination of L-leucine to 4-methyl-2-oxopentanoate. Exhibits the highest activity with L-leucine as substrate, but can also use other L-amino acids such as L-isoleucine, L-valine and L-2-aminovaleric acid. All of the oxo analogs of the amino acid substrates serve as good substrates for the reverse reaction. The protein is Leucine dehydrogenase (ldh) of Thermoactinomyces intermedius.